Here is a 148-residue protein sequence, read N- to C-terminus: Large ribosomal subunit protein uL15 (148 aa).

Over residues 1-30 (MTHSKRNTRKLRGHVSHGHGRVGKHRKHPG) the composition is skewed to basic residues. The disordered stretch occupies residues 1–38 (MTHSKRNTRKLRGHVSHGHGRVGKHRKHPGGRGMAGPE).

The protein belongs to the universal ribosomal protein uL15 family.

The chain is Large ribosomal subunit protein uL15 (RPL27A) from Euplotes crassus.